We begin with the raw amino-acid sequence, 435 residues long: UDP-N-acetylmuramate--L-alanine ligase (435 aa).

An ATP-binding site is contributed by 108–114 (GSHGKTS).

It belongs to the MurCDEF family.

It is found in the cytoplasm. It carries out the reaction UDP-N-acetyl-alpha-D-muramate + L-alanine + ATP = UDP-N-acetyl-alpha-D-muramoyl-L-alanine + ADP + phosphate + H(+). Its pathway is cell wall biogenesis; peptidoglycan biosynthesis. In terms of biological role, cell wall formation. This chain is UDP-N-acetylmuramate--L-alanine ligase, found in Shouchella clausii (strain KSM-K16) (Alkalihalobacillus clausii).